A 238-amino-acid chain; its full sequence is CFA/I fimbrial subunit A (238 aa).

A signal peptide spans 1–19; that stretch reads MHKLFYLLSLLMAPFVANA.

It localises to the fimbrium. Functionally, might function as a shuttle protein in the transport of fimbria through the periplasmic space or might function as an adhesin. The polypeptide is CFA/I fimbrial subunit A (cfaA) (Escherichia coli).